The sequence spans 360 residues: Phosphoserine aminotransferase (360 aa).

Position 42 (Arg42) interacts with L-glutamate. Trp102, Thr152, Asp171, and Gln194 together coordinate pyridoxal 5'-phosphate. Lys195 is modified (N6-(pyridoxal phosphate)lysine). Residue 237–238 (NT) coordinates pyridoxal 5'-phosphate.

Belongs to the class-V pyridoxal-phosphate-dependent aminotransferase family. SerC subfamily. In terms of assembly, homodimer. Requires pyridoxal 5'-phosphate as cofactor.

Its subcellular location is the cytoplasm. The catalysed reaction is O-phospho-L-serine + 2-oxoglutarate = 3-phosphooxypyruvate + L-glutamate. It carries out the reaction 4-(phosphooxy)-L-threonine + 2-oxoglutarate = (R)-3-hydroxy-2-oxo-4-phosphooxybutanoate + L-glutamate. Its pathway is amino-acid biosynthesis; L-serine biosynthesis; L-serine from 3-phospho-D-glycerate: step 2/3. It participates in cofactor biosynthesis; pyridoxine 5'-phosphate biosynthesis; pyridoxine 5'-phosphate from D-erythrose 4-phosphate: step 3/5. Catalyzes the reversible conversion of 3-phosphohydroxypyruvate to phosphoserine and of 3-hydroxy-2-oxo-4-phosphonooxybutanoate to phosphohydroxythreonine. The sequence is that of Phosphoserine aminotransferase from Coxiella burnetii (strain RSA 493 / Nine Mile phase I).